Consider the following 119-residue polypeptide: Holo-[acyl-carrier-protein] synthase (119 aa).

Mg(2+)-binding residues include D8 and E58.

It belongs to the P-Pant transferase superfamily. AcpS family. Mg(2+) serves as cofactor.

It is found in the cytoplasm. The catalysed reaction is apo-[ACP] + CoA = holo-[ACP] + adenosine 3',5'-bisphosphate + H(+). Functionally, transfers the 4'-phosphopantetheine moiety from coenzyme A to a Ser of acyl-carrier-protein. This chain is Holo-[acyl-carrier-protein] synthase, found in Limosilactobacillus fermentum (strain NBRC 3956 / LMG 18251) (Lactobacillus fermentum).